A 244-amino-acid polypeptide reads, in one-letter code: Pyridoxine 5'-phosphate synthase (244 aa).

Asn-12 lines the 3-amino-2-oxopropyl phosphate pocket. 14-15 contributes to the 1-deoxy-D-xylulose 5-phosphate binding site; sequence DH. Arg-23 contributes to the 3-amino-2-oxopropyl phosphate binding site. Residue His-48 is the Proton acceptor of the active site. 1-deoxy-D-xylulose 5-phosphate-binding residues include Arg-50 and His-55. Glu-75 serves as the catalytic Proton acceptor. 1-deoxy-D-xylulose 5-phosphate is bound at residue Thr-105. His-196 serves as the catalytic Proton donor. 3-amino-2-oxopropyl phosphate contacts are provided by residues Gly-197 and 218-219; that span reads GH.

Belongs to the PNP synthase family. As to quaternary structure, homooctamer; tetramer of dimers.

The protein resides in the cytoplasm. It carries out the reaction 3-amino-2-oxopropyl phosphate + 1-deoxy-D-xylulose 5-phosphate = pyridoxine 5'-phosphate + phosphate + 2 H2O + H(+). It participates in cofactor biosynthesis; pyridoxine 5'-phosphate biosynthesis; pyridoxine 5'-phosphate from D-erythrose 4-phosphate: step 5/5. Functionally, catalyzes the complicated ring closure reaction between the two acyclic compounds 1-deoxy-D-xylulose-5-phosphate (DXP) and 3-amino-2-oxopropyl phosphate (1-amino-acetone-3-phosphate or AAP) to form pyridoxine 5'-phosphate (PNP) and inorganic phosphate. The chain is Pyridoxine 5'-phosphate synthase from Alcanivorax borkumensis (strain ATCC 700651 / DSM 11573 / NCIMB 13689 / SK2).